Here is a 1395-residue protein sequence, read N- to C-terminus: DNA-directed RNA polymerase subunit beta' (1395 aa).

Residues cysteine 70, cysteine 72, cysteine 85, and cysteine 88 each coordinate Zn(2+). The Mg(2+) site is built by aspartate 461, aspartate 463, and aspartate 465. The Zn(2+) site is built by cysteine 815, cysteine 889, cysteine 896, and cysteine 899.

Belongs to the RNA polymerase beta' chain family. In terms of assembly, the RNAP catalytic core consists of 2 alpha, 1 beta, 1 beta' and 1 omega subunit. When a sigma factor is associated with the core the holoenzyme is formed, which can initiate transcription. Requires Mg(2+) as cofactor. It depends on Zn(2+) as a cofactor.

The enzyme catalyses RNA(n) + a ribonucleoside 5'-triphosphate = RNA(n+1) + diphosphate. Functionally, DNA-dependent RNA polymerase catalyzes the transcription of DNA into RNA using the four ribonucleoside triphosphates as substrates. In Ruthia magnifica subsp. Calyptogena magnifica, this protein is DNA-directed RNA polymerase subunit beta'.